The chain runs to 108 residues: Virulence-associated protein I (108 aa).

An HTH cro/C1-type domain is found at 19 to 74 (LREEYLKPMGLSAHALAKALHVSPSRINEIVREQRGITADTALRLVRYFGGDAQSW). A DNA-binding region (H-T-H motif) is located at residues 30–49 (SAHALAKALHVSPSRINEIV).

The protein belongs to the VapA/VapI family.

This Dichelobacter nodosus (Bacteroides nodosus) protein is Virulence-associated protein I (vapI).